Consider the following 597-residue polypeptide: Scarecrow-like protein 5 (597 aa).

The tract at residues 111-172 (ESSSGTKSHP…SPLSGSSATN (62 aa)) is disordered. Positions 123-169 (NNKNNSSSTTSFSSNESPISQANNNNLSRFNNHSPEENNNSPLSGSS) are enriched in low complexity. Positions 218 to 597 (SMEMISRGDL…QPLITSCAWR (380 aa)) constitute a GRAS domain. A leucine repeat I (LRI) region spans residues 225 to 285 (GDLKGVLYEC…VARLASSGSS (61 aa)). The segment at 304–369 (MHILYEACPY…GGPPNVRITG (66 aa)) is VHIID. A VHIID motif is present at residues 335-339 (VHIID). Positions 385–417 (LVGQRLGKLAEMCGVPFEFHGAALCCTEVEIEK) are leucine repeat II (LRII). Residues 426–520 (LAVNFPLVLH…QHCLAREVVN (95 aa)) form a PFYRE region. The tract at residues 523–597 (ACEGVEREER…QPLITSCAWR (75 aa)) is SAW.

Belongs to the GRAS family. Expressed in seedlings, roots, shoots, leaves, flowers and siliques.

The protein localises to the nucleus. In terms of biological role, probable transcription factor involved in plant development. The chain is Scarecrow-like protein 5 (SCL5) from Arabidopsis thaliana (Mouse-ear cress).